Consider the following 183-residue polypeptide: Beta-defensin 129 (183 aa).

Positions 1–19 are cleaved as a signal peptide; the sequence is MKLLFPIFASLMLQYQVNT. Disulfide bonds link Cys27–Cys53, Cys34–Cys48, and Cys38–Cys54. Positions 142–183 are disordered; sequence ATSAKSNTKESGDSATASPPPAPPPPNILPTPSLELEEAEEQ. Pro residues predominate over residues 159–170; it reads SPPPAPPPPNIL.

It belongs to the beta-defensin family.

The protein localises to the secreted. Functionally, has antibacterial activity. The polypeptide is Beta-defensin 129 (DEFB129) (Macaca fascicularis (Crab-eating macaque)).